A 733-amino-acid polypeptide reads, in one-letter code: Polyribonucleotide nucleotidyltransferase (733 aa).

Mg(2+) contacts are provided by aspartate 488 and aspartate 494. Residues 555 to 614 (PRIEMMTIPVEKIREVIGSGGKVIREIVEQTGAKINIEDDGTIKIASPDTKSIETAKSWI) enclose the KH domain. The S1 motif domain maps to 624–692 (GTIYQGTVVK…ERGKIRLSMK (69 aa)). Residues 698-733 (TGKEIPQDDLIKTEKEQNPDEKNKSEKKRHNRKKED) are disordered. Residues 702–721 (IPQDDLIKTEKEQNPDEKNK) are compositionally biased toward basic and acidic residues. The segment covering 722 to 733 (SEKKRHNRKKED) has biased composition (basic residues).

Belongs to the polyribonucleotide nucleotidyltransferase family. Mg(2+) serves as cofactor.

It is found in the cytoplasm. The enzyme catalyses RNA(n+1) + phosphate = RNA(n) + a ribonucleoside 5'-diphosphate. Its function is as follows. Involved in mRNA degradation. Catalyzes the phosphorolysis of single-stranded polyribonucleotides processively in the 3'- to 5'-direction. This is Polyribonucleotide nucleotidyltransferase from Bartonella bacilliformis (strain ATCC 35685 / KC583 / Herrer 020/F12,63).